A 441-amino-acid chain; its full sequence is Ribosomal protein uS12 methylthiotransferase RimO (441 aa).

The 111-residue stretch at 7 to 117 (PKISFVSLGC…VLEAVHRALP (111 aa)) folds into the MTTase N-terminal domain. Residues Cys-16, Cys-52, Cys-81, Cys-148, Cys-152, and Cys-155 each coordinate [4Fe-4S] cluster. The region spanning 134-371 (LTPRHYAYLK…MARQQKISAR (238 aa)) is the Radical SAM core domain. The 67-residue stretch at 374–440 (KRKVGTRQQV…AYDLHGTVAG (67 aa)) folds into the TRAM domain.

Belongs to the methylthiotransferase family. RimO subfamily. [4Fe-4S] cluster is required as a cofactor.

The protein resides in the cytoplasm. The catalysed reaction is L-aspartate(89)-[ribosomal protein uS12]-hydrogen + (sulfur carrier)-SH + AH2 + 2 S-adenosyl-L-methionine = 3-methylsulfanyl-L-aspartate(89)-[ribosomal protein uS12]-hydrogen + (sulfur carrier)-H + 5'-deoxyadenosine + L-methionine + A + S-adenosyl-L-homocysteine + 2 H(+). Its function is as follows. Catalyzes the methylthiolation of an aspartic acid residue of ribosomal protein uS12. In Rhodopseudomonas palustris (strain BisA53), this protein is Ribosomal protein uS12 methylthiotransferase RimO.